A 227-amino-acid polypeptide reads, in one-letter code: ATP-dependent dethiobiotin synthetase BioD (227 aa).

Residue 12-17 (DAGKTH) participates in ATP binding. Residue Thr-16 coordinates Mg(2+). The active site involves Lys-37. Ser-41 provides a ligand contact to substrate. ATP-binding positions include Asp-54, 116–119 (EGAG), 176–177 (NQ), and 205–207 (PYS). The Mg(2+) site is built by Asp-54 and Glu-116.

The protein belongs to the dethiobiotin synthetase family. As to quaternary structure, homodimer. Requires Mg(2+) as cofactor.

It is found in the cytoplasm. It carries out the reaction (7R,8S)-7,8-diammoniononanoate + CO2 + ATP = (4R,5S)-dethiobiotin + ADP + phosphate + 3 H(+). The protein operates within cofactor biosynthesis; biotin biosynthesis; biotin from 7,8-diaminononanoate: step 1/2. Catalyzes a mechanistically unusual reaction, the ATP-dependent insertion of CO2 between the N7 and N8 nitrogen atoms of 7,8-diaminopelargonic acid (DAPA, also called 7,8-diammoniononanoate) to form a ureido ring. The protein is ATP-dependent dethiobiotin synthetase BioD of Pseudoalteromonas translucida (strain TAC 125).